A 1526-amino-acid polypeptide reads, in one-letter code: Cell wall protein IFF4 (1526 aa).

The signal sequence occupies residues 1 to 20 (MKFLQKFIITVALLTNIVFA). N-linked (GlcNAc...) asparagine glycans are attached at residues asparagine 93 and asparagine 498. The disordered stretch occupies residues 512 to 541 (SSAGGSSFPEETHMLQTSDSDLSSTAGSES). A compositionally biased stretch (polar residues) spans 525-541 (MLQTSDSDLSSTAGSES). An N-linked (GlcNAc...) asparagine glycan is attached at asparagine 637. A disordered region spans residues 1180 to 1207 (WNGAKSDSPHTSESDITSQYNSHSTSVA). The span at 1193-1207 (SDITSQYNSHSTSVA) shows a compositional bias: polar residues. N-linked (GlcNAc...) asparagine glycans are attached at residues asparagine 1451, asparagine 1463, asparagine 1479, asparagine 1502, and asparagine 1506. Residues 1455–1483 (SSVSGYPTNRSDSNGYANTPTTGSNTSGD) are disordered. Asparagine 1502 is lipidated: GPI-anchor amidated asparagine. Residues 1503 to 1526 (GSTNISNKYLKFLGTVVSILILLI) constitute a propeptide, removed in mature form.

It belongs to the HYR1/IFF family. Post-translationally, the GPI-anchor is attached to the protein in the endoplasmic reticulum and serves to target the protein to the cell surface. There, the glucosamine-inositol phospholipid moiety is cleaved off and the GPI-$modified mannoprotein is covalently attached via its lipidless GPI glycan remnant to the 1,6-beta-glucan of the outer cell wall layer.

The protein localises to the secreted. The protein resides in the cell wall. It localises to the membrane. GPI-anchored cell wall protein involved in cell wall organization, hyphal growth, as well as in host-fungal interaction and virulence. Plays a role in adherence to plastic and to host epithelial cells. Promotes the tissue fungal burden during murine vaginal candidiasis. Also increases susceptibility to neutrophil-mediated killing. Furthermore, contributes to the severity of hematogenously disseminated candidiasis in normal mice, but not in neutropenic mice. The polypeptide is Cell wall protein IFF4 (IFF4) (Candida albicans (strain SC5314 / ATCC MYA-2876) (Yeast)).